A 208-amino-acid chain; its full sequence is Outer-membrane lipoprotein carrier protein (208 aa).

A signal peptide spans 1–21 (MRLIRTLFVAALAMGASLAHA).

It belongs to the LolA family. As to quaternary structure, monomer.

Its subcellular location is the periplasm. Its function is as follows. Participates in the translocation of lipoproteins from the inner membrane to the outer membrane. Only forms a complex with a lipoprotein if the residue after the N-terminal Cys is not an aspartate (The Asp acts as a targeting signal to indicate that the lipoprotein should stay in the inner membrane). This is Outer-membrane lipoprotein carrier protein from Pseudomonas aeruginosa (strain UCBPP-PA14).